The sequence spans 76 residues: Defensin-like protein 5 (76 aa).

An N-terminal signal peptide occupies residues 1–29 (MKVSPRLNSALLLLFMILATVMGLVTVEA). 4 disulfides stabilise this stretch: Cys-32/Cys-76, Cys-43/Cys-63, Cys-49/Cys-70, and Cys-53/Cys-72.

It belongs to the DEFL family.

The protein localises to the secreted. Confers broad-spectrum resistance to pathogens. This chain is Defensin-like protein 5 (PDF2.4), found in Arabidopsis thaliana (Mouse-ear cress).